The following is a 764-amino-acid chain: 5-methyltetrahydropteroyltriglutamate--homocysteine methyltransferase (764 aa).

5-methyltetrahydropteroyltri-L-glutamate contacts are provided by residues 16–19 and Lys121; that span reads RELK. L-homocysteine-binding positions include 440–442 and Glu493; that span reads IGS. L-methionine is bound by residues 440–442 and Glu493; that span reads IGS. 5-methyltetrahydropteroyltri-L-glutamate contacts are provided by residues 524 to 525 and Trp570; that span reads RC. Asp608 is a binding site for L-homocysteine. L-methionine is bound at residue Asp608. Glu614 is a binding site for 5-methyltetrahydropteroyltri-L-glutamate. Zn(2+)-binding residues include His650, Cys652, and Glu674. His703 serves as the catalytic Proton donor. Cys735 lines the Zn(2+) pocket.

This sequence belongs to the vitamin-B12 independent methionine synthase family. Requires Zn(2+) as cofactor.

It catalyses the reaction 5-methyltetrahydropteroyltri-L-glutamate + L-homocysteine = tetrahydropteroyltri-L-glutamate + L-methionine. Its pathway is amino-acid biosynthesis; L-methionine biosynthesis via de novo pathway; L-methionine from L-homocysteine (MetE route): step 1/1. In terms of biological role, catalyzes the transfer of a methyl group from 5-methyltetrahydrofolate to homocysteine resulting in methionine formation. The protein is 5-methyltetrahydropteroyltriglutamate--homocysteine methyltransferase of Burkholderia ambifaria (strain ATCC BAA-244 / DSM 16087 / CCUG 44356 / LMG 19182 / AMMD) (Burkholderia cepacia (strain AMMD)).